The primary structure comprises 69 residues: Sec-independent protein translocase protein TatA (69 aa).

The helical transmembrane segment at Met-1–Gly-21 threads the bilayer.

This sequence belongs to the TatA/E family. Forms a complex with TatC.

Its subcellular location is the cell inner membrane. Part of the twin-arginine translocation (Tat) system that transports large folded proteins containing a characteristic twin-arginine motif in their signal peptide across membranes. TatA could form the protein-conducting channel of the Tat system. This chain is Sec-independent protein translocase protein TatA, found in Chlorobium phaeovibrioides (strain DSM 265 / 1930) (Prosthecochloris vibrioformis (strain DSM 265)).